Here is a 593-residue protein sequence, read N- to C-terminus: Arginine--tRNA ligase (593 aa).

The 'HIGH' region signature appears at A138–H148.

This sequence belongs to the class-I aminoacyl-tRNA synthetase family. Monomer.

Its subcellular location is the cytoplasm. The enzyme catalyses tRNA(Arg) + L-arginine + ATP = L-arginyl-tRNA(Arg) + AMP + diphosphate. This Burkholderia vietnamiensis (strain G4 / LMG 22486) (Burkholderia cepacia (strain R1808)) protein is Arginine--tRNA ligase.